We begin with the raw amino-acid sequence, 196 residues long: Probable nicotinate-nucleotide adenylyltransferase (196 aa).

Belongs to the NadD family.

The enzyme catalyses nicotinate beta-D-ribonucleotide + ATP + H(+) = deamido-NAD(+) + diphosphate. The protein operates within cofactor biosynthesis; NAD(+) biosynthesis; deamido-NAD(+) from nicotinate D-ribonucleotide: step 1/1. Functionally, catalyzes the reversible adenylation of nicotinate mononucleotide (NaMN) to nicotinic acid adenine dinucleotide (NaAD). The sequence is that of Probable nicotinate-nucleotide adenylyltransferase from Thermotoga sp. (strain RQ2).